The sequence spans 382 residues: Methylthioribose-1-phosphate isomerase (382 aa).

Residue aspartate 261 is the Proton donor of the active site.

This sequence belongs to the eIF-2B alpha/beta/delta subunits family. MtnA subfamily.

It is found in the cytoplasm. Its subcellular location is the nucleus. The catalysed reaction is 5-(methylsulfanyl)-alpha-D-ribose 1-phosphate = 5-(methylsulfanyl)-D-ribulose 1-phosphate. It functions in the pathway amino-acid biosynthesis; L-methionine biosynthesis via salvage pathway; L-methionine from S-methyl-5-thio-alpha-D-ribose 1-phosphate: step 1/6. Functionally, catalyzes the interconversion of methylthioribose-1-phosphate (MTR-1-P) into methylthioribulose-1-phosphate (MTRu-1-P). This is Methylthioribose-1-phosphate isomerase from Ricinus communis (Castor bean).